The following is a 364-amino-acid chain: MSRADDPGVAGLQVYIVGGAVRDGLLGLPAGDRDWVVVGATPEDMARRGFIPVGGDFPVFLHPRTKEEYALARTERKSGRGYKGFTFYTGADVTLEQDLQRRDLTVNAIARTPQGELVDPLDGVADVRARVLRHVGEAFAEDPVRILRLGRFAARFGDFSIAPETMQLCRRMVEAGEADALVPERVWKEVSRGLMAQAPSRMLDVLARAGALARVMPELHDDAAVRAEIDRAAAAGLPLAGRYALLCRHTPERDALGRRLRAPVECMDQARLLPLAVDALAASATPAAQLDLIERCDALRKPERFDALLQAAAIVAPVDLSAWRARVQAVRAIDAGAIARQCAGDPARIKPALRQARLQALGGA.

ATP contacts are provided by G19 and R22. 2 residues coordinate CTP: G19 and R22. Mg(2+) contacts are provided by D32 and D34. ATP is bound by residues R102, R148, and R151. R102, R148, and R151 together coordinate CTP.

Belongs to the tRNA nucleotidyltransferase/poly(A) polymerase family. Bacterial CCA-adding enzyme type 2 subfamily. Requires Mg(2+) as cofactor.

The catalysed reaction is a tRNA precursor + 2 CTP + ATP = a tRNA with a 3' CCA end + 3 diphosphate. It carries out the reaction a tRNA with a 3' CCA end + 2 CTP + ATP = a tRNA with a 3' CCACCA end + 3 diphosphate. Functionally, catalyzes the addition and repair of the essential 3'-terminal CCA sequence in tRNAs without using a nucleic acid template. Adds these three nucleotides in the order of C, C, and A to the tRNA nucleotide-73, using CTP and ATP as substrates and producing inorganic pyrophosphate. tRNA 3'-terminal CCA addition is required both for tRNA processing and repair. Also involved in tRNA surveillance by mediating tandem CCA addition to generate a CCACCA at the 3' terminus of unstable tRNAs. While stable tRNAs receive only 3'-terminal CCA, unstable tRNAs are marked with CCACCA and rapidly degraded. The chain is CCA-adding enzyme from Bordetella bronchiseptica (strain ATCC BAA-588 / NCTC 13252 / RB50) (Alcaligenes bronchisepticus).